Here is a 437-residue protein sequence, read N- to C-terminus: Cobyrinate a,c-diamide synthase (437 aa).

The GATase cobBQ-type domain occupies 243–433 (IAAIAYDSAF…SHFHFSSARG (191 aa)). The active-site Nucleophile is Cys-324.

The protein belongs to the CobB/CbiA family. Requires Mg(2+) as cofactor.

It catalyses the reaction cob(II)yrinate + 2 L-glutamine + 2 ATP + 2 H2O = cob(II)yrinate a,c diamide + 2 L-glutamate + 2 ADP + 2 phosphate + 2 H(+). Its pathway is cofactor biosynthesis; adenosylcobalamin biosynthesis; cob(II)yrinate a,c-diamide from sirohydrochlorin (anaerobic route): step 10/10. Functionally, catalyzes the ATP-dependent amidation of the two carboxylate groups at positions a and c of cobyrinate, using either L-glutamine or ammonia as the nitrogen source. This Sulfurisphaera tokodaii (strain DSM 16993 / JCM 10545 / NBRC 100140 / 7) (Sulfolobus tokodaii) protein is Cobyrinate a,c-diamide synthase.